We begin with the raw amino-acid sequence, 257 residues long: MWIGIISLFPEMFRAITDYGVTGRAVKNGLLSIDSWSPRDFTHDRHRTVDDRPYGGGPGMLMMVQPLRDAIHAAKAAAGEGAKVIYLSPQGRKLDQAGVSELATNEKLILVCGRYEGIDERVIQTEIDEEWSIGDYVLSGGELPAMTLIDSVARFIPGVLGHEASATEDSFADGLLDCPHYTRPEVLEGMEVPPVLLSGNHAEIRRWRLKQSLGRTWLRRPELLENLALTEEQAKLLAEFKTEHAQQQHRHDGTGDA.

S-adenosyl-L-methionine is bound by residues Gly113 and 133-138; that span reads IGDYVL.

The protein belongs to the RNA methyltransferase TrmD family. In terms of assembly, homodimer.

It localises to the cytoplasm. The enzyme catalyses guanosine(37) in tRNA + S-adenosyl-L-methionine = N(1)-methylguanosine(37) in tRNA + S-adenosyl-L-homocysteine + H(+). In terms of biological role, specifically methylates guanosine-37 in various tRNAs. This chain is tRNA (guanine-N(1)-)-methyltransferase, found in Cronobacter sakazakii (strain ATCC BAA-894) (Enterobacter sakazakii).